Consider the following 156-residue polypeptide: 6,7-dimethyl-8-ribityllumazine synthase (156 aa).

5-amino-6-(D-ribitylamino)uracil-binding positions include Phe22, 56–58 (ALE), and 80–82 (AVI). 85–86 (DT) lines the (2S)-2-hydroxy-3-oxobutyl phosphate pocket. Residue His88 is the Proton donor of the active site. Phe113 serves as a coordination point for 5-amino-6-(D-ribitylamino)uracil. Arg127 serves as a coordination point for (2S)-2-hydroxy-3-oxobutyl phosphate.

Belongs to the DMRL synthase family.

It catalyses the reaction (2S)-2-hydroxy-3-oxobutyl phosphate + 5-amino-6-(D-ribitylamino)uracil = 6,7-dimethyl-8-(1-D-ribityl)lumazine + phosphate + 2 H2O + H(+). It participates in cofactor biosynthesis; riboflavin biosynthesis; riboflavin from 2-hydroxy-3-oxobutyl phosphate and 5-amino-6-(D-ribitylamino)uracil: step 1/2. In terms of biological role, catalyzes the formation of 6,7-dimethyl-8-ribityllumazine by condensation of 5-amino-6-(D-ribitylamino)uracil with 3,4-dihydroxy-2-butanone 4-phosphate. This is the penultimate step in the biosynthesis of riboflavin. The polypeptide is 6,7-dimethyl-8-ribityllumazine synthase (Leuconostoc mesenteroides subsp. mesenteroides (strain ATCC 8293 / DSM 20343 / BCRC 11652 / CCM 1803 / JCM 6124 / NCDO 523 / NBRC 100496 / NCIMB 8023 / NCTC 12954 / NRRL B-1118 / 37Y)).